Here is a 268-residue protein sequence, read N- to C-terminus: Myeloid leukemia factor 1 (268 aa).

A phosphoserine mark is found at serine 6, serine 8, and serine 32. Positions 50-125 are interaction with COPS3; that stretch reads RVHNRRGHND…IGDEPPKVFQ (76 aa). The disordered stretch occupies residues 208–268; the sequence is PGRHNLENTR…KGSSVKSNKK (61 aa). 2 stretches are compositionally biased toward basic and acidic residues: residues 226–237 and 244–257; these read PGSRELKRREKP and EHGR…DKLH.

It belongs to the MLF family. As to quaternary structure, interacts with CENPU. Also interacts with NRBP1/MADM, YWHAZ/14-3-3-zeta and HNRPUL2/MANP. NRBP1 recruits a serine kinase which phosphorylates both itself and MLF1. Phosphorylated MLF1 then binds to YWHAZ and is retained in the cytoplasm. Retained in the nucleus by binding to HNRPUL2. Binds to COPS3/CSN3 which is required for suppression of COP1 and activation of p53. In terms of processing, phosphorylation is required for binding to YWHAZ.

The protein resides in the cytoplasm. The protein localises to the nucleus. It localises to the cell projection. It is found in the cilium. Its subcellular location is the cytoskeleton. The protein resides in the cilium basal body. In terms of biological role, involved in lineage commitment of primary hemopoietic progenitors by restricting erythroid formation and enhancing myeloid formation. Interferes with erythropoietin-induced erythroid terminal differentiation by preventing cells from exiting the cell cycle through suppression of CDKN1B/p27Kip1 levels. Suppresses COP1 activity via CSN3 which activates p53 and induces cell cycle arrest. Binds DNA and affects the expression of a number of genes so may function as a transcription factor in the nucleus. The protein is Myeloid leukemia factor 1 (MLF1) of Pongo abelii (Sumatran orangutan).